Consider the following 504-residue polypeptide: Maturase K (504 aa).

This sequence belongs to the intron maturase 2 family. MatK subfamily.

It is found in the plastid. The protein resides in the chloroplast. Usually encoded in the trnK tRNA gene intron. Probably assists in splicing its own and other chloroplast group II introns. The sequence is that of Maturase K from Wollastonia biflora (Beach sunflower).